We begin with the raw amino-acid sequence, 394 residues long: 1-deoxy-D-xylulose 5-phosphate reductoisomerase (394 aa).

Positions 10, 11, 12, 13, 38, and 125 each coordinate NADPH. A 1-deoxy-D-xylulose 5-phosphate-binding site is contributed by K126. An NADPH-binding site is contributed by E127. Residue D151 coordinates Mn(2+). The 1-deoxy-D-xylulose 5-phosphate site is built by S152, E153, S182, and H205. A Mn(2+)-binding site is contributed by E153. Residue G211 coordinates NADPH. S218, N223, K224, and E227 together coordinate 1-deoxy-D-xylulose 5-phosphate. E227 is a binding site for Mn(2+).

The protein belongs to the DXR family. Mg(2+) serves as cofactor. Mn(2+) is required as a cofactor.

It catalyses the reaction 2-C-methyl-D-erythritol 4-phosphate + NADP(+) = 1-deoxy-D-xylulose 5-phosphate + NADPH + H(+). It functions in the pathway isoprenoid biosynthesis; isopentenyl diphosphate biosynthesis via DXP pathway; isopentenyl diphosphate from 1-deoxy-D-xylulose 5-phosphate: step 1/6. Its function is as follows. Catalyzes the NADPH-dependent rearrangement and reduction of 1-deoxy-D-xylulose-5-phosphate (DXP) to 2-C-methyl-D-erythritol 4-phosphate (MEP). This Methylococcus capsulatus (strain ATCC 33009 / NCIMB 11132 / Bath) protein is 1-deoxy-D-xylulose 5-phosphate reductoisomerase.